The chain runs to 176 residues: ATP-dependent protease subunit HslV (176 aa).

Residue T6 is part of the active site. The Na(+) site is built by G161, C164, and T167.

The protein belongs to the peptidase T1B family. HslV subfamily. As to quaternary structure, a double ring-shaped homohexamer of HslV is capped on each side by a ring-shaped HslU homohexamer. The assembly of the HslU/HslV complex is dependent on binding of ATP.

Its subcellular location is the cytoplasm. It catalyses the reaction ATP-dependent cleavage of peptide bonds with broad specificity.. Allosterically activated by HslU binding. Its function is as follows. Protease subunit of a proteasome-like degradation complex believed to be a general protein degrading machinery. In Thermotoga sp. (strain RQ2), this protein is ATP-dependent protease subunit HslV.